We begin with the raw amino-acid sequence, 123 residues long: Large ribosomal subunit protein eL8 (123 aa).

Belongs to the eukaryotic ribosomal protein eL8 family. Part of the 50S ribosomal subunit. Probably part of the RNase P complex.

The protein localises to the cytoplasm. Multifunctional RNA-binding protein that recognizes the K-turn motif in ribosomal RNA, the RNA component of RNase P, box H/ACA, box C/D and box C'/D' sRNAs. The polypeptide is Large ribosomal subunit protein eL8 (Methanobrevibacter smithii (strain ATCC 35061 / DSM 861 / OCM 144 / PS)).